The following is a 91-amino-acid chain: Potassium channel toxin MeuTXK-beta-2 (91 aa).

Positions 1-19 (MQRNLVVLLFLGMVALSSC) are cleaved as a signal peptide. Residues 54–91 (QFGCSAYQGYCDDHCQDIEKKEGFCHGFKCKCGIPMGF) enclose the BetaSPN-type CS-alpha/beta domain. Intrachain disulfides connect cysteine 57–cysteine 78, cysteine 64–cysteine 83, and cysteine 68–cysteine 85.

Belongs to the long chain scorpion toxin family. Class 1 subfamily. In terms of tissue distribution, expressed by the venom gland.

The protein resides in the secreted. Has a low affinity binding to potassium channels of rat brain synaptosomes. Displays weak antibacterial activity against Stenotrophomonas sp. Strongly inhibits the development of the Plasmodium berghei ookinetes. Displays slight hemolytic effect on mouse erythrocytes. Induces cytolysis on Xenopus oocytes at high concentrations. Is not toxic towards mice and towards the insect Tenebrio molitor. The sequence is that of Potassium channel toxin MeuTXK-beta-2 from Mesobuthus eupeus (Lesser Asian scorpion).